We begin with the raw amino-acid sequence, 148 residues long: SsrA-binding protein (148 aa).

Positions 129–142 (ETEKKRDWEREKAR) are enriched in basic and acidic residues. Residues 129-148 (ETEKKRDWEREKARIMRAGT) form a disordered region.

The protein belongs to the SmpB family.

It is found in the cytoplasm. Its function is as follows. Required for rescue of stalled ribosomes mediated by trans-translation. Binds to transfer-messenger RNA (tmRNA), required for stable association of tmRNA with ribosomes. tmRNA and SmpB together mimic tRNA shape, replacing the anticodon stem-loop with SmpB. tmRNA is encoded by the ssrA gene; the 2 termini fold to resemble tRNA(Ala) and it encodes a 'tag peptide', a short internal open reading frame. During trans-translation Ala-aminoacylated tmRNA acts like a tRNA, entering the A-site of stalled ribosomes, displacing the stalled mRNA. The ribosome then switches to translate the ORF on the tmRNA; the nascent peptide is terminated with the 'tag peptide' encoded by the tmRNA and targeted for degradation. The ribosome is freed to recommence translation, which seems to be the essential function of trans-translation. This is SsrA-binding protein from Burkholderia lata (strain ATCC 17760 / DSM 23089 / LMG 22485 / NCIMB 9086 / R18194 / 383).